A 358-amino-acid chain; its full sequence is Peptide chain release factor 1 (358 aa).

The residue at position 233 (Q233) is an N5-methylglutamine. Positions 282 to 306 (QRAASERSADRRGQVGSGDRSERVR) are enriched in basic and acidic residues. The disordered stretch occupies residues 282-308 (QRAASERSADRRGQVGSGDRSERVRTY).

Belongs to the prokaryotic/mitochondrial release factor family. Methylated by PrmC. Methylation increases the termination efficiency of RF1.

The protein resides in the cytoplasm. Functionally, peptide chain release factor 1 directs the termination of translation in response to the peptide chain termination codons UAG and UAA. This is Peptide chain release factor 1 from Afipia carboxidovorans (strain ATCC 49405 / DSM 1227 / KCTC 32145 / OM5) (Oligotropha carboxidovorans).